Here is a 292-residue protein sequence, read N- to C-terminus: tRNA-cytidine(32) 2-sulfurtransferase (292 aa).

The short motif at 53 to 58 (SGGKDS) is the PP-loop motif element. Residues Cys128, Cys131, and Cys219 each contribute to the [4Fe-4S] cluster site.

Belongs to the TtcA family. Homodimer. It depends on Mg(2+) as a cofactor. The cofactor is [4Fe-4S] cluster.

It is found in the cytoplasm. It carries out the reaction cytidine(32) in tRNA + S-sulfanyl-L-cysteinyl-[cysteine desulfurase] + AH2 + ATP = 2-thiocytidine(32) in tRNA + L-cysteinyl-[cysteine desulfurase] + A + AMP + diphosphate + H(+). Its pathway is tRNA modification. Catalyzes the ATP-dependent 2-thiolation of cytidine in position 32 of tRNA, to form 2-thiocytidine (s(2)C32). The sulfur atoms are provided by the cysteine/cysteine desulfurase (IscS) system. The sequence is that of tRNA-cytidine(32) 2-sulfurtransferase from Cereibacter sphaeroides (strain ATCC 17029 / ATH 2.4.9) (Rhodobacter sphaeroides).